A 67-amino-acid chain; its full sequence is Protein AaeX (67 aa).

The next 2 membrane-spanning stretches (helical) occupy residues 8-28 (VLFGLSFPPAFFALLAALPLF) and 47-67 (PALFNCALYGCLFYLVSWLFI).

The protein belongs to the AaeX family.

The protein resides in the cell membrane. This chain is Protein AaeX, found in Edwardsiella piscicida.